The following is a 417-amino-acid chain: Actin-related protein 10 (417 aa).

It belongs to the actin family. As to quaternary structure, subunit of dynactin, a multiprotein complex part of a tripartite complex with dynein and a adapter, such as BICDL1, BICD2 or HOOK3. The dynactin complex is built around ACTR1A/ACTB filament and consists of an actin-related filament composed of a shoulder domain, a pointed end and a barbed end. Its length is defined by its flexible shoulder domain. The soulder is composed of 2 DCTN1 subunits, 4 DCTN2 and 2 DCTN3. The 4 DCNT2 (via N-terminus) bind the ACTR1A filament and act as molecular rulers to determine the length. The pointed end is important for binding dynein-dynactin cargo adapters. Consists of 4 subunits: ACTR10, DCNT4, DCTN5 and DCTN6. The barbed end is composed of a CAPZA1:CAPZB heterodimers, which binds ACTR1A/ACTB filament and dynactin and stabilizes dynactin.

It localises to the cytoplasm. The protein resides in the cytoskeleton. Its function is as follows. Part of the dynactin complex that activates the molecular motor dynein for ultra-processive transport along microtubules. The protein is Actin-related protein 10 (ACTR10) of Sus scrofa (Pig).